The following is a 207-amino-acid chain: MPNTNPVAAWKALKEGNERFVAGRPQHPSQSVDHRAGLAAGQKPTAVIFGCADSRVAAEIIFDQGLGDMFVVRTAGHVIDSAVLGSIEYAVTVLNVPLIVVLGHDSCGAVNAALAAINDGTLPGGYVRDVVERVAPSVLLGRRDGLSRVDEFEQRHVHETVAILMARSSAISERIAGGSLAIVGVTYQLDDGRAVLRDHIGNIGEEV.

Zn(2+)-binding residues include cysteine 51, aspartate 53, histidine 104, and cysteine 107.

The protein belongs to the beta-class carbonic anhydrase family. It depends on Zn(2+) as a cofactor.

The enzyme catalyses hydrogencarbonate + H(+) = CO2 + H2O. In terms of biological role, catalyzes the reversible hydration of carbon dioxide to form bicarbonate. The chain is Carbonic anhydrase 2 (mtcA2) from Mycobacterium tuberculosis (strain CDC 1551 / Oshkosh).